A 1532-amino-acid chain; its full sequence is Multidrug resistance-associated protein 1 (1532 aa).

The Extracellular segment spans residues 1 to 33 (MALSSFCSSDGSDPLWDWNVTWHTSNPDFTKCF). N-linked (GlcNAc...) asparagine glycosylation occurs at N19. Residues 34-54 (QNTVLTWVPCFYLWSCFPLYF) form a helical membrane-spanning segment. The Cytoplasmic segment spans residues 55 to 74 (LYLSRHDRGYIQMTHLNKAK). The helical transmembrane segment at 75-95 (TALGFFLWIICWADLFYSFWE) threads the bilayer. Topologically, residues 96–100 (RSQGM) are extracellular. The helical transmembrane segment at 101-121 (LLAPVLLVSPTLLGITMLLAT) threads the bilayer. The Cytoplasmic portion of the chain corresponds to 122–133 (FLIQFERRKGVQ). The chain crosses the membrane as a helical span at residues 134-154 (SSGIMLTFWLVALLCALAILR). The Extracellular portion of the chain corresponds to 155–172 (SKIISALKKDAQVDMFRD). A helical transmembrane segment spans residues 173–193 (SAFYLYFTLVFIQLVLSCFSD). Over 194 to 317 (SSPLFSETVR…KDRDPSLFKV (124 aa)) the chain is Cytoplasmic. Y277 carries the post-translational modification Phosphotyrosine. Residue S290 is modified to Phosphoserine. A helical transmembrane segment spans residues 318 to 338 (LYKTFGPYFLMSFLYKALHDL). In terms of domain architecture, ABC transmembrane type-1 1 spans 326-609 (FLMSFLYKAL…LPMVISSIVQ (284 aa)). The Extracellular segment spans residues 339-364 (MMFAGPEILELIINFVNDREAPDWQG). The chain crosses the membrane as a helical span at residues 365–385 (YLYTALLFVSACLQTLALHQY). Residues 386-441 (FHICFVTGMRIKTAVVGAVYRKALVITNSARKSSTVGEIVNLMSVDAQRFMDLATY) are Cytoplasmic-facing. Residues 442–462 (INMIWSAPLQVTLALYFLWLN) traverse the membrane as a helical segment. Topologically, residues 463–465 (LGP) are extracellular. A helical transmembrane segment spans residues 466-486 (SVLAGVAVMILMVPFNAVMAM). Topologically, residues 487–548 (KTKTYQVAHM…VLKKSAYLAA (62 aa)) are cytoplasmic. K504 is subject to N6-succinyllysine. Residues 549 to 569 (VGTFTWVCTPFLVALSTFAVF) form a helical membrane-spanning segment. Over 570-591 (VTVDEKNILDAKKAFVSLALFN) the chain is Extracellular. A helical membrane pass occupies residues 592–612 (ILRFPLNILPMVISSIVQASV). The Cytoplasmic portion of the chain corresponds to 613–967 (SLKRLRIFLS…VKLSVYWNYM (355 aa)). The ABC transporter 1 domain maps to 645-869 (ITVKNATFTW…DGAFAEFVRT (225 aa)). An ATP-binding site is contributed by 679–686 (GQVGCGKS). Residues S879, S883, S916, and S931 each carry the phosphoserine modification. The helical transmembrane segment at 968–988 (KAIGLCISFLSIFLFLCNHVS) threads the bilayer. Positions 975–1257 (SFLSIFLFLC…LVRMSSEMET (283 aa)) constitute an ABC transmembrane type-1 2 domain. Topologically, residues 989-1026 (ALASNYWLSLWTDDRPAVNGTQENRNFRLSVYGALGIL) are extracellular. A helical membrane pass occupies residues 1027–1047 (QGVAVFGYSMAVSIGGIFASR). Over 1048–1090 (RLHLDLLQNVLRSPMSFFERTPSGNLVNRFSKELDTVDSMIPQ) the chain is Cytoplasmic. A helical membrane pass occupies residues 1091 to 1111 (VIKMFMGSLFSVIGAVIIILL). A1112 is a topological domain (extracellular). The chain crosses the membrane as a helical span at residues 1113 to 1133 (TPIAAVIIPPLGLVYFFVQRF). Topologically, residues 1134–1204 (YVASSRQLKR…VANRWLAVRL (71 aa)) are cytoplasmic. A helical membrane pass occupies residues 1205 to 1225 (ECVGNCIVLFAALFAVISRHS). Over 1226-1227 (LS) the chain is Extracellular. The chain crosses the membrane as a helical span at residues 1228–1248 (AGLVGLSVSYSLQITAYLNWL). Residues 1249 to 1532 (VRMSSEMETN…YSMAKDAGLV (284 aa)) are Cytoplasmic-facing. Positions 1294-1528 (VEFRDYCLRY…RGVFYSMAKD (235 aa)) constitute an ABC transporter 2 domain. Residue 1328–1335 (GRTGAGKS) coordinates ATP.

Belongs to the ABC transporter superfamily. ABCC family. Conjugate transporter (TC 3.A.1.208) subfamily. Glycosylated. In terms of tissue distribution, skeletal muscle, brain, heart, spleen, lung and kidney.

The protein resides in the cell membrane. It localises to the basolateral cell membrane. It catalyses the reaction ATP + H2O + xenobioticSide 1 = ADP + phosphate + xenobioticSide 2.. The enzyme catalyses an S-substituted glutathione(in) + ATP + H2O = an S-substituted glutathione(out) + ADP + phosphate + H(+). The catalysed reaction is sphing-4-enine 1-phosphate(in) + ATP + H2O = sphing-4-enine 1-phosphate(out) + ADP + phosphate + H(+). It carries out the reaction leukotriene C4(in) + ATP + H2O = leukotriene C4(out) + ADP + phosphate + H(+). It catalyses the reaction 17beta-estradiol 17-O-(beta-D-glucuronate)(in) + ATP + H2O = 17beta-estradiol 17-O-(beta-D-glucuronate)(out) + ADP + phosphate + H(+). The enzyme catalyses daunorubicin(in) + ATP + H2O = daunorubicin(out) + ADP + phosphate + H(+). The catalysed reaction is vincristine(in) + ATP + H2O = vincristine(out) + ADP + phosphate + H(+). It carries out the reaction 2',3'-cGAMP(in) + ATP + H2O = 2',3'-cGAMP(out) + ADP + phosphate + H(+). It catalyses the reaction S-[(2E,6E,10E)-geranylgeranyl]-L-glutathione(in) + ATP + H2O = S-[(2E,6E,10E)-geranylgeranyl]-L-glutathione(out) + ADP + phosphate + H(+). The enzyme catalyses prostaglandin A2-S-(R)-glutathione(in) + ATP + H2O = prostaglandin A2-S-(R)-glutathione(out) + ADP + phosphate + H(+). The catalysed reaction is prostaglandin A2-S-(S)-glutathione(in) + ATP + H2O = prostaglandin A2-S-(S)-glutathione(out) + ADP + phosphate + H(+). MK 571 inhibits sphingosine 1-phosphate and leukotriene C4 export. Functionally, mediates export of organic anions and drugs from the cytoplasm. Mediates ATP-dependent transport of glutathione and glutathione conjugates, leukotriene C4, estradiol-17-beta-o-glucuronide, methotrexate, antiviral drugs and other xenobiotics. Confers resistance to anticancer drugs by decreasing accumulation of drug in cells, and by mediating ATP- and GSH-dependent drug export. Hydrolyzes ATP with low efficiency. Catalyzes the export of sphingosine 1-phosphate from mast cells independently of their degranulation. Participates in inflammatory response by allowing export of leukotriene C4 from leukotriene C4-synthesizing cells. Exports S-geranylgeranyl-glutathione (GGG) in lymphoid cells and stromal compartments of lymphoid organs. ABCC1 (via extracellular transport) with GGT5 (via GGG catabolism) establish GGG gradients within lymphoid tissues to position P2RY8-positive lymphocytes at germinal centers in lymphoid follicles and restrict their chemotactic transmigration from blood vessels to the bone marrow parenchyma. Mediates basolateral export of GSH-conjugated R- and S-prostaglandin A2 diastereomers in polarized epithelial cells. In Rattus norvegicus (Rat), this protein is Multidrug resistance-associated protein 1.